The chain runs to 679 residues: Protein FAM178B (679 aa).

Residues 70–113 are disordered; the sequence is PLDQGPRCPARRPCSPASAPAPTSPKKPKIQAPGETFPTDWSPP. A compositionally biased stretch (low complexity) spans 75–90; sequence PRCPARRPCSPASAPA.

Belongs to the FAM178 family.

This is Protein FAM178B from Homo sapiens (Human).